A 373-amino-acid chain; its full sequence is MSEVKSRKKPGPKVAAPEPEKRSDGRKNPEARGGAGWADPRTGLSLLSLATSLGLAWLVFQQSEKFAKVENQYRLLQTESSEFQGLQSKISLISNKLESTENTLQEATSSMSLMTQFEQEVAGLQRSIHDIENSEEMLTQKLQNLNEKFQNITDLWKRTLVEMSDNTAVFKSEAKSTHSEVTLKINSAEQEIKLLTERLKDLEDSTLRNIRTVSRQEEEDLLRVEAQLSSDTKAVEKLEEEQRTLLARDEDLTDKLSSYEPKVEECKAHLPTIENAVHSVLRVSQDLIGTERKMEELTVQMFNMEDDMLKAVSEIMEMQNTLEGIQYDNSLLKMQNELVVLKGKVHDFMAYSSAGEKGTLEEYNLENKGTDDY.

The segment covering 1-11 (MSEVKSRKKPG) has biased composition (basic residues). The segment at 1–38 (MSEVKSRKKPGPKVAAPEPEKRSDGRKNPEARGGAGWA) is disordered. Basic and acidic residues predominate over residues 18-30 (EPEKRSDGRKNPE). Residues 43-59 (GLSLLSLATSLGLAWLV) traverse the membrane as a helical segment. Coiled coils occupy residues 64–257 (EKFA…DKLS) and 290–325 (TERKMEELTVQMFNMEDDMLKAVSEIMEMQNTLEGI). N151 is a glycosylation site (N-linked (GlcNAc...) asparagine).

Post-translationally, N-glycosylated at Asn-151.

Its subcellular location is the endoplasmic reticulum membrane. Target of p53/TP53 with pro-apoptotic function. The protein is Inhibitor of nuclear factor kappa-B kinase-interacting protein (Ikbip) of Rattus norvegicus (Rat).